We begin with the raw amino-acid sequence, 354 residues long: Anthranilate phosphoribosyltransferase (354 aa).

The protein belongs to the anthranilate phosphoribosyltransferase family.

It carries out the reaction N-(5-phospho-beta-D-ribosyl)anthranilate + diphosphate = 5-phospho-alpha-D-ribose 1-diphosphate + anthranilate. It participates in amino-acid biosynthesis; L-tryptophan biosynthesis; L-tryptophan from chorismate: step 2/5. The protein is Anthranilate phosphoribosyltransferase (trp4) of Schizosaccharomyces pombe (strain 972 / ATCC 24843) (Fission yeast).